The primary structure comprises 341 residues: MKVKDFDFYLPEELIAQHPMEKRDEARLLVLDKETGEIEHKIFKDILDYLTPNDCLVLNNTRVLPARLIGAKEETGGKMEFLLLKRKEKDVWETLVKPGKRAQIGARFIFGNGELKAEVIGMGEEGSRIVKFYYEGIFEEILDQLGQMPLPPYIKEKLDDKEMYQTVYSKEEGSAAAPTAGLHFTEELLKKIKEKGVKLAFLTLHVGLGTFRPVKVEDIQEHVMHSEYYKMDKETAEIINDTKEKGGRVIAVGTTSCRTLETIGDIEGKVREQSGWTDIFIYPGYKYKVVDALITNFHLPQSTLLMLVSALAGRDNIMNAYNVAVEKEYRFFSFGDAMFIK.

Belongs to the QueA family. Monomer.

Its subcellular location is the cytoplasm. It catalyses the reaction 7-aminomethyl-7-carbaguanosine(34) in tRNA + S-adenosyl-L-methionine = epoxyqueuosine(34) in tRNA + adenine + L-methionine + 2 H(+). It functions in the pathway tRNA modification; tRNA-queuosine biosynthesis. In terms of biological role, transfers and isomerizes the ribose moiety from AdoMet to the 7-aminomethyl group of 7-deazaguanine (preQ1-tRNA) to give epoxyqueuosine (oQ-tRNA). The polypeptide is S-adenosylmethionine:tRNA ribosyltransferase-isomerase (Clostridium botulinum (strain Loch Maree / Type A3)).